The chain runs to 184 residues: Photosystem I assembly protein Ycf4 (184 aa).

Helical transmembrane passes span 20–40 (GNFF…VVGI) and 64–84 (IVMS…WCTI).

Belongs to the Ycf4 family.

Its subcellular location is the plastid. It is found in the chloroplast thylakoid membrane. Seems to be required for the assembly of the photosystem I complex. The chain is Photosystem I assembly protein Ycf4 from Citrus sinensis (Sweet orange).